Here is a 291-residue protein sequence, read N- to C-terminus: Probable 2-(5''-triphosphoribosyl)-3'-dephosphocoenzyme-A synthase (291 aa).

This sequence belongs to the CitG/MdcB family.

It carries out the reaction 3'-dephospho-CoA + ATP = 2'-(5''-triphospho-alpha-D-ribosyl)-3'-dephospho-CoA + adenine. In terms of biological role, involved in the formation of 2-(5''-phosphoribosyl)-3'-dephosphocoenzyme-A, the prosthetic group of the acyl-carrier protein of the malonate decarboxylase. This chain is Probable 2-(5''-triphosphoribosyl)-3'-dephosphocoenzyme-A synthase, found in Pseudomonas syringae pv. tomato (strain ATCC BAA-871 / DC3000).